The chain runs to 228 residues: RNA chaperone ProQ (228 aa).

The disordered stretch occupies residues 105–178 (EAKARVQAQR…REEQHTPVSD (74 aa)). Composition is skewed to basic and acidic residues over residues 117-136 (QQAKKREAAAAAGEKEDAPR) and 146-173 (RRKETTPRTPRAEKPAAKAPRAPREEQH).

Belongs to the ProQ family.

Its subcellular location is the cytoplasm. Functionally, RNA chaperone with significant RNA binding, RNA strand exchange and RNA duplexing activities. May regulate ProP activity through an RNA-based, post-transcriptional mechanism. The chain is RNA chaperone ProQ from Citrobacter koseri (strain ATCC BAA-895 / CDC 4225-83 / SGSC4696).